A 295-amino-acid polypeptide reads, in one-letter code: Ribosomal RNA small subunit methyltransferase A (295 aa).

Residues Asn29, Leu31, Gly56, Glu77, Asp102, and Asn127 each coordinate S-adenosyl-L-methionine.

It belongs to the class I-like SAM-binding methyltransferase superfamily. rRNA adenine N(6)-methyltransferase family. RsmA subfamily.

The protein resides in the cytoplasm. The catalysed reaction is adenosine(1518)/adenosine(1519) in 16S rRNA + 4 S-adenosyl-L-methionine = N(6)-dimethyladenosine(1518)/N(6)-dimethyladenosine(1519) in 16S rRNA + 4 S-adenosyl-L-homocysteine + 4 H(+). Its function is as follows. Specifically dimethylates two adjacent adenosines (A1518 and A1519) in the loop of a conserved hairpin near the 3'-end of 16S rRNA in the 30S particle. May play a critical role in biogenesis of 30S subunits. The chain is Ribosomal RNA small subunit methyltransferase A from Anoxybacillus flavithermus (strain DSM 21510 / WK1).